A 248-amino-acid polypeptide reads, in one-letter code: UPF0736 protein BCG9842_B4111 (248 aa).

The protein belongs to the UPF0736 family.

This chain is UPF0736 protein BCG9842_B4111, found in Bacillus cereus (strain G9842).